The chain runs to 346 residues: Uroporphyrinogen decarboxylase (346 aa).

Substrate-binding positions include 26–30 (RQAGR), aspartate 76, tyrosine 153, serine 208, and histidine 323.

The protein belongs to the uroporphyrinogen decarboxylase family. In terms of assembly, homodimer.

The protein localises to the cytoplasm. It carries out the reaction uroporphyrinogen III + 4 H(+) = coproporphyrinogen III + 4 CO2. The protein operates within porphyrin-containing compound metabolism; protoporphyrin-IX biosynthesis; coproporphyrinogen-III from 5-aminolevulinate: step 4/4. In terms of biological role, catalyzes the decarboxylation of four acetate groups of uroporphyrinogen-III to yield coproporphyrinogen-III. The sequence is that of Uroporphyrinogen decarboxylase from Prochlorococcus marinus (strain MIT 9312).